A 332-amino-acid chain; its full sequence is Trans-2'-carboxybenzalpyruvate hydratase-aldolase (332 aa).

Lysine 178 functions as the Schiff-base intermediate with substrate in the catalytic mechanism.

Belongs to the DapA family. Homotrimer.

The catalysed reaction is (3Z)-4-(2-carboxyphenyl)-2-oxobut-3-enoate + H2O = 2-formylbenzoate + pyruvate. Its activity is regulated as follows. Not inhibited by sodium borohydride or sodium pyruvate. Unaffected by EDTA, EGTA, Mn(2+), Mg(2+) and Ca(2+). Its function is as follows. Plays a role in phenanthrene catabolism. Catalyzes the transformation of trans-2'-carboxbenzalpyruvate to 2-formylbenzoate and pyruvate. The chain is Trans-2'-carboxybenzalpyruvate hydratase-aldolase from Nocardioides sp. (strain KP7).